The chain runs to 940 residues: Glutamate receptor 2.9 (940 aa).

An N-terminal signal peptide occupies residues 1–23 (MKTNNTFLSYFVCGFLLMGVGLG). The Extracellular portion of the chain corresponds to 24–566 (QNQTSEIKVG…DTWVFLEPWS (543 aa)). N-linked (GlcNAc...) asparagine glycosylation is found at Asn25, Asn39, Asn115, Asn338, Asn345, and Asn528. A helical membrane pass occupies residues 567 to 587 (LELWVTTGCFFVFIGFVVWLF). Over 588–596 (EHRVNTDFR) the chain is Cytoplasmic. Residues 597–617 (GPPQYQIGTSLWFSFSTMVFA) form a helical membrane-spanning segment. Residues 618–628 (HRENVVSNLAR) are Cytoplasmic-facing. Residues 629–649 (FVVVVWCFVVLVLTQSYTASL) traverse the membrane as a helical segment. The Extracellular segment spans residues 650–811 (TSFLTVQSLQ…NRLNLSSFLG (162 aa)). N-linked (GlcNAc...) asparagine glycosylation is found at Asn771, Asn776, and Asn805. Residues 812–832 (LFLIAGTAISFSLLVFVALFL) traverse the membrane as a helical segment. The Cytoplasmic segment spans residues 833–940 (YEHRHTLGDD…ESDIECRVEQ (108 aa)). Disordered stretches follow at residues 876–900 (ISSPMTHKTPSPSTVQITPWPQSPS) and 914–940 (PSEERFTTQPIIHHEDGESDIECRVEQ).

The protein belongs to the glutamate-gated ion channel (TC 1.A.10.1) family. In terms of assembly, may form heteromers. Expressed predominantly in roots.

It is found in the membrane. Glutamate-gated receptor that probably acts as a non-selective cation channel. May be involved in light-signal transduction and calcium homeostasis via the regulation of calcium influx into cells. The polypeptide is Glutamate receptor 2.9 (GLR2.9) (Arabidopsis thaliana (Mouse-ear cress)).